Consider the following 89-residue polypeptide: Small ribosomal subunit protein bS20 (89 aa).

The interval 1 to 26 is disordered; that stretch reads MANSPQAKKRARQNEKNRKHNASLRS. Residues 7-22 show a composition bias toward basic residues; that stretch reads AKKRARQNEKNRKHNA.

The protein belongs to the bacterial ribosomal protein bS20 family.

In terms of biological role, binds directly to 16S ribosomal RNA. This is Small ribosomal subunit protein bS20 from Marinobacter nauticus (strain ATCC 700491 / DSM 11845 / VT8) (Marinobacter aquaeolei).